The primary structure comprises 338 residues: Fructose-1,6-bisphosphatase class 1 (338 aa).

Residues glutamate 94, aspartate 116, leucine 118, and aspartate 119 each coordinate Mg(2+). Residues 119–122 (DGSS), asparagine 210, and lysine 276 each bind substrate. Mg(2+) is bound at residue glutamate 282.

The protein belongs to the FBPase class 1 family. Homotetramer. Requires Mg(2+) as cofactor.

The protein localises to the cytoplasm. It catalyses the reaction beta-D-fructose 1,6-bisphosphate + H2O = beta-D-fructose 6-phosphate + phosphate. It functions in the pathway carbohydrate biosynthesis; gluconeogenesis. The polypeptide is Fructose-1,6-bisphosphatase class 1 (Paraburkholderia phytofirmans (strain DSM 17436 / LMG 22146 / PsJN) (Burkholderia phytofirmans)).